A 360-amino-acid polypeptide reads, in one-letter code: Peptide chain release factor 1 (360 aa).

Gln235 carries the post-translational modification N5-methylglutamine. Residues 284 to 304 form a disordered region; the sequence is KVDSERSADRKSQVGSGDRSE.

This sequence belongs to the prokaryotic/mitochondrial release factor family. In terms of processing, methylated by PrmC. Methylation increases the termination efficiency of RF1.

It localises to the cytoplasm. Functionally, peptide chain release factor 1 directs the termination of translation in response to the peptide chain termination codons UAG and UAA. In Agrobacterium fabrum (strain C58 / ATCC 33970) (Agrobacterium tumefaciens (strain C58)), this protein is Peptide chain release factor 1.